The primary structure comprises 214 residues: Pyridoxine/pyridoxamine 5'-phosphate oxidase (214 aa).

Residues 9 to 12 (RRSY) and Lys-68 each bind substrate. Residues 63 to 68 (RVVLLK), 78 to 79 (YT), Lys-85, and Gln-107 each bind FMN. Positions 125, 129, and 133 each coordinate substrate. FMN is bound by residues 142–143 (QS) and Trp-187. 193-195 (RLH) is a binding site for substrate. Arg-197 serves as a coordination point for FMN.

It belongs to the pyridoxamine 5'-phosphate oxidase family. Homodimer. It depends on FMN as a cofactor.

It catalyses the reaction pyridoxamine 5'-phosphate + O2 + H2O = pyridoxal 5'-phosphate + H2O2 + NH4(+). It carries out the reaction pyridoxine 5'-phosphate + O2 = pyridoxal 5'-phosphate + H2O2. The protein operates within cofactor metabolism; pyridoxal 5'-phosphate salvage; pyridoxal 5'-phosphate from pyridoxamine 5'-phosphate: step 1/1. It participates in cofactor metabolism; pyridoxal 5'-phosphate salvage; pyridoxal 5'-phosphate from pyridoxine 5'-phosphate: step 1/1. Its function is as follows. Catalyzes the oxidation of either pyridoxine 5'-phosphate (PNP) or pyridoxamine 5'-phosphate (PMP) into pyridoxal 5'-phosphate (PLP). This is Pyridoxine/pyridoxamine 5'-phosphate oxidase from Christiangramia forsetii (strain DSM 17595 / CGMCC 1.15422 / KT0803) (Gramella forsetii).